The primary structure comprises 287 residues: Cyclopropane mycolic acid synthase MmaA2 (287 aa).

S-adenosyl-L-methionine is bound by residues 33–34 (YS), 72–74 (GCG), 94–99 (TLSKNQ), 123–124 (WE), and Ile136. Residue Cys269 is part of the active site.

This sequence belongs to the CFA/CMAS family.

The catalysed reaction is a 1-acyl-2-(9Z)-enoyl-sn-glycero-3-phospholipid + S-adenosyl-L-methionine = a 1-acyl-2-(9-cyclopronane)-acyl-sn-glycero-3-phospholipid + S-adenosyl-L-homocysteine + H(+). The protein operates within lipid metabolism; mycolic acid biosynthesis. Catalyzes the conversion of a double bond to a cis cyclopropane ring at the distal position of an alpha mycolic acid via the transfer of a methylene group from S-adenosyl-L-methionine. MmaA2 also catalyzes the biosynthesis of the cis-cyclopropanated methoxymycolates. Cyclopropanated mycolic acids are key factors participating in cell envelope permeability, host immunomodulation and persistence. This is Cyclopropane mycolic acid synthase MmaA2 (mmaA2) from Mycobacterium tuberculosis (strain ATCC 25177 / H37Ra).